Reading from the N-terminus, the 405-residue chain is Deoxyguanosinetriphosphate triphosphohydrolase-like protein (405 aa).

The region spanning 75 to 219 (RLTHTIEVAQ…AAIADDIAYN (145 aa)) is the HD domain.

The protein belongs to the dGTPase family. Type 2 subfamily.

The protein is Deoxyguanosinetriphosphate triphosphohydrolase-like protein of Sinorhizobium medicae (strain WSM419) (Ensifer medicae).